The sequence spans 205 residues: Transcriptional regulatory protein PdtaR (205 aa).

In terms of domain architecture, Response regulatory spans arginine 15–valine 129. Aspartate 65 carries the post-translational modification 4-aspartylphosphate. An ANTAR domain is found at isoleucine 135–leucine 196.

Phosphorylated and activated by PdtaS.

It localises to the cytoplasm. In terms of biological role, member of the two-component regulatory system PdtaR/PdtaS. This two-component system plays an essential role in mycobacterial adaptation to poor nutrient conditions. PdtaR probably acts at the level of transcriptional antitermination rather than transcriptional initiation. Its function is as follows. In addition, the PdtaR/PdtaS two-component system controls copper and nitric oxide (NO) resistance downstream of the intramembrane protease Rip1. This coupled Rip1/PdtaS/PdtaR circuit controls NO resistance and acute lung infection in mice by relieving PdtaR/PdtaS-mediated repression of isonitrile chalkophore biosynthesis. Two signals are required to fully inactivate the PdtaR/PdtaS system and mediate NO resistance: a cytoplasmic inhibitory signal through the PdtaS kinase mediated by direct sensing of NO and the production of PPE1-5', an NO-induced small RNA, to sequester PdtaR. This is Transcriptional regulatory protein PdtaR (pdtaR) from Mycobacterium tuberculosis (strain CDC 1551 / Oshkosh).